Here is a 226-residue protein sequence, read N- to C-terminus: Ribonuclease 3 (226 aa).

Residues 6–128 (INRLQRKLGY…LIGGVFLDSD (123 aa)) form the RNase III domain. Residue glutamate 41 coordinates Mg(2+). The active site involves aspartate 45. 2 residues coordinate Mg(2+): aspartate 114 and glutamate 117. The active site involves glutamate 117. Residues 155–225 (DPKTRLQEYL…AEQALKKLEL (71 aa)) enclose the DRBM domain.

Belongs to the ribonuclease III family. As to quaternary structure, homodimer. The cofactor is Mg(2+).

It localises to the cytoplasm. The enzyme catalyses Endonucleolytic cleavage to 5'-phosphomonoester.. Its function is as follows. Digests double-stranded RNA. Involved in the processing of primary rRNA transcript to yield the immediate precursors to the large and small rRNAs (23S and 16S). Processes some mRNAs, and tRNAs when they are encoded in the rRNA operon. Processes pre-crRNA and tracrRNA of type II CRISPR loci if present in the organism. The polypeptide is Ribonuclease 3 (Klebsiella pneumoniae (strain 342)).